Consider the following 98-residue polypeptide: MSYIPGQPVTAVVQRVEIHKLRQGENLILGFSIGGGIDQDPSQNPFSEDKTDKVNGWDMTMVTHDQARKRLTKRSEEVVRLLVTRQSLQKAVQQSMLS.

Ser-2 bears the N-acetylserine mark. A PDZ domain is found at 12–87; the sequence is VVQRVEIHKL…VVRLLVTRQS (76 aa).

As to quaternary structure, interacts (via its PDZ domain) with GLS2. Interacts (via its PDZ domain) with RTKN (via the C-terminal region); this interaction facilitates Rho-mediated activation of the FOS serum response element (SRE). Interacts (via PDZ domain) with ARHGEF16. Interacts (via PDZ domain) with KCNJ4 (via C-terminus). Competes with LIN7A for KCNJ4 binding. Interacts (via its PDZ domain) with CTNNB1; this interaction inhibits the transcriptional activity of CTNNB1. Interacts with ADGRB2. As to expression, detected in kidney distal convoluted tubules (at protein level).

It is found in the cytoplasm. The protein localises to the nucleus. Its subcellular location is the cell membrane. In terms of biological role, may regulate a number of protein-protein interactions by competing for PDZ domain binding sites. Binds CTNNB1 and may thereby act as an inhibitor of the Wnt signaling pathway. Competes with LIN7A for KCNJ4 binding, and thereby promotes KCNJ4 internalization. May play a role in the Rho signaling pathway. In Rattus norvegicus (Rat), this protein is Tax1-binding protein 3.